Consider the following 434-residue polypeptide: GTPase Der (434 aa).

2 EngA-type G domains span residues 3–167 and 175–350; these read NIVA…PEIE and PRFA…ESRS. GTP contacts are provided by residues 9–16, 56–60, 119–122, 181–188, 228–232, and 293–296; these read GRPNVGKS, DTGGY, NKVD, GRPNAGKS, DTAGI, and NKWD. Positions 351–434 constitute a KH-like domain; sequence KKIKTRQFND…VPISIFFRKK (84 aa).

It belongs to the TRAFAC class TrmE-Era-EngA-EngB-Septin-like GTPase superfamily. EngA (Der) GTPase family. As to quaternary structure, associates with the 50S ribosomal subunit.

Its function is as follows. GTPase that plays an essential role in the late steps of ribosome biogenesis. The sequence is that of GTPase Der from Christiangramia forsetii (strain DSM 17595 / CGMCC 1.15422 / KT0803) (Gramella forsetii).